The sequence spans 244 residues: 2-C-methyl-D-erythritol 4-phosphate cytidylyltransferase (244 aa).

Belongs to the IspD/TarI cytidylyltransferase family. IspD subfamily.

The enzyme catalyses 2-C-methyl-D-erythritol 4-phosphate + CTP + H(+) = 4-CDP-2-C-methyl-D-erythritol + diphosphate. It participates in isoprenoid biosynthesis; isopentenyl diphosphate biosynthesis via DXP pathway; isopentenyl diphosphate from 1-deoxy-D-xylulose 5-phosphate: step 2/6. Its function is as follows. Catalyzes the formation of 4-diphosphocytidyl-2-C-methyl-D-erythritol from CTP and 2-C-methyl-D-erythritol 4-phosphate (MEP). The polypeptide is 2-C-methyl-D-erythritol 4-phosphate cytidylyltransferase (Solibacter usitatus (strain Ellin6076)).